The sequence spans 445 residues: Phosphoglucosamine mutase (445 aa).

The Phosphoserine intermediate role is filled by S101. S101, D240, D242, and D244 together coordinate Mg(2+). S101 is modified (phosphoserine).

It belongs to the phosphohexose mutase family. Mg(2+) serves as cofactor. Activated by phosphorylation.

It catalyses the reaction alpha-D-glucosamine 1-phosphate = D-glucosamine 6-phosphate. In terms of biological role, catalyzes the conversion of glucosamine-6-phosphate to glucosamine-1-phosphate. This is Phosphoglucosamine mutase from Ectopseudomonas mendocina (strain ymp) (Pseudomonas mendocina).